The chain runs to 155 residues: Mediator of RNA polymerase II transcription subunit 10 (155 aa).

A disordered region spans residues 54-80 (SSHTQSHAPDADTAQANPSDPPISTIE).

The protein belongs to the Mediator complex subunit 10 family. Component of the Mediator complex.

It localises to the nucleus. In terms of biological role, component of the Mediator complex, a coactivator involved in the regulated transcription of nearly all RNA polymerase II-dependent genes. Mediator functions as a bridge to convey information from gene-specific regulatory proteins to the basal RNA polymerase II transcription machinery. Mediator is recruited to promoters by direct interactions with regulatory proteins and serves as a scaffold for the assembly of a functional preinitiation complex with RNA polymerase II and the general transcription factors. This Aspergillus terreus (strain NIH 2624 / FGSC A1156) protein is Mediator of RNA polymerase II transcription subunit 10 (nut2).